Reading from the N-terminus, the 38-residue chain is Photosystem II reaction center protein L (38 aa).

A helical transmembrane segment spans residues serine 17–phenylalanine 37.

Belongs to the PsbL family. PSII is composed of 1 copy each of membrane proteins PsbA, PsbB, PsbC, PsbD, PsbE, PsbF, PsbH, PsbI, PsbJ, PsbK, PsbL, PsbM, PsbT, PsbY, PsbZ, Psb30/Ycf12, at least 3 peripheral proteins of the oxygen-evolving complex and a large number of cofactors. It forms dimeric complexes.

The protein resides in the plastid. The protein localises to the chloroplast thylakoid membrane. Its function is as follows. One of the components of the core complex of photosystem II (PSII). PSII is a light-driven water:plastoquinone oxidoreductase that uses light energy to abstract electrons from H(2)O, generating O(2) and a proton gradient subsequently used for ATP formation. It consists of a core antenna complex that captures photons, and an electron transfer chain that converts photonic excitation into a charge separation. This subunit is found at the monomer-monomer interface and is required for correct PSII assembly and/or dimerization. The protein is Photosystem II reaction center protein L of Cyanidium caldarium (Red alga).